The primary structure comprises 386 residues: Alcohol dehydrogenase-like 2 (386 aa).

Zn(2+) is bound by residues Cys-51, Thr-53, His-74, Cys-104, Cys-107, Cys-110, Cys-118, and Cys-183. The an alcohol site is built by Thr-53 and His-74. Thr-53 is a binding site for NAD(+). NAD(+)-binding positions include Gly-208–Gly-213, Asp-232, Lys-237, Leu-302–Met-304, Phe-329, and Arg-379.

The protein belongs to the zinc-containing alcohol dehydrogenase family. Class-III subfamily. Homodimer. The cofactor is Zn(2+).

It localises to the cytoplasm. It carries out the reaction a primary alcohol + NAD(+) = an aldehyde + NADH + H(+). It catalyses the reaction a secondary alcohol + NAD(+) = a ketone + NADH + H(+). This Arabidopsis thaliana (Mouse-ear cress) protein is Alcohol dehydrogenase-like 2.